The chain runs to 146 residues: Lipoprotein signal peptidase (146 aa).

A run of 3 helical transmembrane segments spans residues 6–26 (IFLLVAIGIFIIDQNIKTLFL), 50–70 (MFAFIGPYLKWVQALLIGGIL), and 82–104 (YAFPAGLLIGGALGNLYDRFVHA). Active-site residues include Asp108 and Asp125. The helical transmembrane segment at 123–143 (FADVAIDLAVAWILIMVYFFP) threads the bilayer.

Belongs to the peptidase A8 family.

It is found in the cell inner membrane. The catalysed reaction is Release of signal peptides from bacterial membrane prolipoproteins. Hydrolyzes -Xaa-Yaa-Zaa-|-(S,diacylglyceryl)Cys-, in which Xaa is hydrophobic (preferably Leu), and Yaa (Ala or Ser) and Zaa (Gly or Ala) have small, neutral side chains.. It functions in the pathway protein modification; lipoprotein biosynthesis (signal peptide cleavage). This protein specifically catalyzes the removal of signal peptides from prolipoproteins. In Sulfurovum sp. (strain NBC37-1), this protein is Lipoprotein signal peptidase.